The chain runs to 52 residues: Conotoxin Cal6.36 (52 aa).

The signal sequence occupies residues 1-22 (MKVTCVLTLAVLILTVGQMVTA). 3 disulfides stabilise this stretch: Cys24-Cys39, Cys31-Cys43, and Cys38-Cys47.

Expressed by the venom duct.

Its subcellular location is the secreted. Probable neurotoxin. In Californiconus californicus (California cone), this protein is Conotoxin Cal6.36.